The primary structure comprises 689 residues: Putative pentatricopeptide repeat-containing protein At3g15130 (689 aa).

PPR repeat units lie at residues 5-39 (QRQN…GSGL), 40-70 (NLIT…MPER), 71-105 (NVVS…GIYP), 106-140 (NEFT…GFEM), 141-171 (MVEV…IVDR), 172-206 (SLIS…NIKE), 209-243 (DEFT…GFHC), 246-276 (SATI…IKEK), 277-311 (TMIS…NSQI), 312-342 (DSFA…AVKL), 347-377 (ETSV…MQLK), 378-412 (DVIS…NIEP), 413-448 (DEVC…GIKP), and 449-479 (RVEH…MPIK). Residues 484 to 559 (IWQTLLSLCR…EAGMSWVEIE (76 aa)) form a type E motif region. The tract at residues 560-590 (REVHFFRSGEDSHPLTPVIQETLKEAERRLR) is type E(+) motif. The type DYW motif stretch occupies residues 592-689 (ELGYVYGLKH…DGCCSCGDYW (98 aa)).

It belongs to the PPR family. PCMP-H subfamily.

In Arabidopsis thaliana (Mouse-ear cress), this protein is Putative pentatricopeptide repeat-containing protein At3g15130 (PCMP-H86).